Here is a 205-residue protein sequence, read N- to C-terminus: MAPTQNLFLVAIAFAVIFTASTVHGRHNGAEDIVHSSCEHASYPSLCVRTLSSYSGPTITNRRDLAQAAIKISLSHAQSAAKKLAVVRDSVGKKKQEKAALVDCVEMIGDSVDELSRTLGVLKHLRVSGGSAKEFRWQMSNAQTWASAALTDDDTCLDGFQGMDDGEIKTEVKQWMTKVARVTSNALYMVNQLDETRGKPHDVHL.

The first 25 residues, 1–25 (MAPTQNLFLVAIAFAVIFTASTVHG), serve as a signal peptide directing secretion. 2 disulfide bridges follow: Cys-38-Cys-47 and Cys-104-Cys-156.

Belongs to the PMEI family. As to expression, expressed in apical meristem.

It localises to the secreted. It is found in the extracellular space. The protein localises to the apoplast. Pectin methylesterase (PME) inhibitor that can target PMEs (e.g. PME2 and PME3) in a pH-dependent manner, mainly in slightly acidic conditions (pH 6.3 and 5.0) but not at pH 7.5; this processus relies on changes in the protonation of amino acids involved in intermolecular and intramolecular interactions. Regulates de-methylesterification of pectins in the apical meristem and affects primordia formation and phyllotactic patterning. This is Pectinesterase inhibitor 3 from Arabidopsis thaliana (Mouse-ear cress).